A 128-amino-acid polypeptide reads, in one-letter code: Large ribosomal subunit protein bL17 (128 aa).

It belongs to the bacterial ribosomal protein bL17 family. In terms of assembly, part of the 50S ribosomal subunit. Contacts protein L32.

The sequence is that of Large ribosomal subunit protein bL17 from Streptococcus pneumoniae serotype 2 (strain D39 / NCTC 7466).